A 292-amino-acid polypeptide reads, in one-letter code: MAAITASMVAELRAKTDAPMMECKKALTEADGDLGKAEELLRVKLGNKASKAASRVTAEGIVVSYIDGTTGALVELNCETDFVSKNDDFLGFGAKVAELVAKQNPADVAVLSALEMDGSTVDAVRSALIGKIGENMTIRRFVRYTNGGKLVSYLHGTRIGVMVEFDGDEAAAKDVAMHVAAMKPVSLSADQVPAELIAKERSIAEQKAAESGKPAEIVAKMVEGSVQKYLKEVSLLNQSFVKNDKQTVEQMLKGVNTTVKGFTLYVVGEGIEKKQDDFAAEVAAQVAAAQKA.

Residues 80–83 (TDFV) are involved in Mg(2+) ion dislocation from EF-Tu.

This sequence belongs to the EF-Ts family.

The protein localises to the cytoplasm. Its function is as follows. Associates with the EF-Tu.GDP complex and induces the exchange of GDP to GTP. It remains bound to the aminoacyl-tRNA.EF-Tu.GTP complex up to the GTP hydrolysis stage on the ribosome. The polypeptide is Elongation factor Ts (Cupriavidus metallidurans (strain ATCC 43123 / DSM 2839 / NBRC 102507 / CH34) (Ralstonia metallidurans)).